The chain runs to 423 residues: MANPRVFPLSCVVQQYAWGKVGSKSEVACLLACSDPLTQISEDKPYAELWMGAHPRGDAKILDNRISQKTLGQWIAENQNSLGQKVKDTFNGKLPFLFKVLSVETALSIQAHPNKELAEKLHLQAPEHYPDANHKPEMAIALTPFQGLCGFRPVEEIVTFLKKVPEFQSLIGEDATAQLKKSMNEGSGAMASALKNCFSHLMKSEKKVVVEQLNLLVKRISQQISNGNSMDDICGELLLQLHQQYPGDIGCFAIYLLNLITLKPGEAMFLEANVPHAYLKGDCVECMACSDNTVRAGLTPKFIDVSTLCEMLDYTPSPSKDRLFAPTLSQDDPYLSIYDPPVPDFTVMKIEVPGSVTEYKVLTLDSASILLLVQGTVTAIIPSVQGEIPLSRGGVLFIGANETVLLKLTVPKNLLIFRACCLL.

The residue at position 2 (Ala2) is an N-acetylalanine. A phosphoserine mark is found at Ser102 and Ser108. Positions 110, 112, 137, and 276 each coordinate Zn(2+). Residue Arg295 is part of the active site.

The protein belongs to the mannose-6-phosphate isomerase type 1 family. It depends on Zn(2+) as a cofactor.

The protein localises to the cytoplasm. The enzyme catalyses D-mannose 6-phosphate = D-fructose 6-phosphate. It functions in the pathway nucleotide-sugar biosynthesis; GDP-alpha-D-mannose biosynthesis; alpha-D-mannose 1-phosphate from D-fructose 6-phosphate: step 1/2. Its function is as follows. Isomerase that catalyzes the interconversion of fructose-6-P and mannose-6-P and has a critical role in the supply of D-mannose derivatives required for many eukaryotic glycosylation reactions. This Rattus norvegicus (Rat) protein is Mannose-6-phosphate isomerase.